The primary structure comprises 308 residues: Probable 5-dehydro-4-deoxyglucarate dehydratase (308 aa).

This sequence belongs to the DapA family.

It carries out the reaction 5-dehydro-4-deoxy-D-glucarate + H(+) = 2,5-dioxopentanoate + CO2 + H2O. The protein operates within carbohydrate acid metabolism; D-glucarate degradation; 2,5-dioxopentanoate from D-glucarate: step 2/2. This Bacillus licheniformis (strain ATCC 14580 / DSM 13 / JCM 2505 / CCUG 7422 / NBRC 12200 / NCIMB 9375 / NCTC 10341 / NRRL NRS-1264 / Gibson 46) protein is Probable 5-dehydro-4-deoxyglucarate dehydratase.